A 426-amino-acid polypeptide reads, in one-letter code: Pannexin-1 (426 aa).

At 1–40 the chain is on the cytoplasmic side; sequence MAIAHLATEYVFSDFLLKEPTEPKFKGLRLELAVDKMVTC. Residue Cys-40 is modified to S-nitrosocysteine. The chain crosses the membrane as a helical span at residues 41 to 61; the sequence is IAVGLPLLLISLAFAQEISIG. At 62-106 the chain is on the extracellular side; that stretch reads TQISCFSPSSFSWRQAAFVDSYCWAAVQQKSSLQSESGNLPLWLH. 2 disulfides stabilise this stretch: Cys-66-Cys-264 and Cys-84-Cys-245. The chain crosses the membrane as a helical span at residues 107-127; the sequence is KFFPYILLLFAILLYLPALFW. The Cytoplasmic segment spans residues 128-216; it reads RFSAAPHLCS…HLIMKYISCR (89 aa). Tyr-198 carries the phosphotyrosine modification. Residues 217 to 237 form a helical membrane-spanning segment; sequence LVTFVVILLACIYLSYYFSLS. The Extracellular portion of the chain corresponds to 238-277; the sequence is SLSDEFLCSIKSGVLKNDSTIPDRFQCKLIAVGIFQLLSL. A glycan (N-linked (GlcNAc...) asparagine) is linked at Asn-254. A helical transmembrane segment spans residues 278–298; the sequence is INLIVYALLIPVVVYTFFIPF. Residues 299–426 lie on the Cytoplasmic side of the membrane; the sequence is RQKTDILKVY…SRQRLLNPSC (128 aa). Cys-346 bears the S-nitrosocysteine mark.

Belongs to the pannexin family. In terms of assembly, homoheptameric. S-nitrosylation inhibits channel currents and ATP release. In terms of processing, N-glycosylation may play a role in cell surface targeting. Exists in three glycosylation states: non-glycosylated (GLY0), high-mannose glycosylated (GLY1), and fully mature glycosylated (GLY2). Post-translationally, phosphorylated at Tyr-198 by SRC. Phosphorylation activates ATP release. Constitutively phosphorylated in vascular smooth muscle cells. Cleaved by CASP3 and CASP7 during apoptosis. Cleavage opens the channel for the release of metabolites and induces plasma membrane permeability during apoptosis. As to expression, widely expressed, including in cartilage, skin, spleen and brain.

The protein localises to the cell membrane. It localises to the endoplasmic reticulum membrane. The enzyme catalyses chloride(in) = chloride(out). It catalyses the reaction iodide(out) = iodide(in). The catalysed reaction is Ca(2+)(in) = Ca(2+)(out). It carries out the reaction ATP(in) = ATP(out). The enzyme catalyses K(+)(in) = K(+)(out). It catalyses the reaction Na(+)(in) = Na(+)(out). The catalysed reaction is nitrate(in) = nitrate(out). It carries out the reaction L-aspartate(out) = L-aspartate(in). The enzyme catalyses L-glutamate(out) = L-glutamate(in). It catalyses the reaction D-gluconate(in) = D-gluconate(out). The catalysed reaction is spermidine(in) = spermidine(out). Its function is as follows. Ion channel involved in a variety of physiological functions such as blood pressure regulation, apoptotic cell clearance and oogenesis. Forms anion-selective channels with relatively low conductance and an order of permeabilities: nitrate&gt;iodide&gt;chlroride&gt;&gt;aspartate=glutamate=gluconate. Can release ATP upon activation through phosphorylation or cleavage at C-terminus. May play a role as a Ca(2+)-leak channel to regulate ER Ca(2+) homeostasis. Functionally, during apoptosis and after cleavage by caspases of the C-terminal tail, acts as a plasma membrane channel which mediates the regulated release of find-me signals, such as nucleotides ATP and UTP, and selective plasme membrane permeability. The polypeptide is Pannexin-1 (Mus musculus (Mouse)).